The primary structure comprises 85 residues: MAHKKAGGSSRNGRDSHSKRLGVKHFGGETIRSGSIIVRQRGTKFHAGNNVDCAKDHTLFATSQGKVKFEKKGKCNRTYVSIIPE.

The disordered stretch occupies residues 1 to 25; the sequence is MAHKKAGGSSRNGRDSHSKRLGVKH.

It belongs to the bacterial ribosomal protein bL27 family.

This is Large ribosomal subunit protein bL27 from Buchnera aphidicola subsp. Baizongia pistaciae (strain Bp).